The following is a 211-amino-acid chain: Cell division protein SepF (211 aa).

Acidic residues predominate over residues 15–26; that stretch reads DTDEVNEVEEEV. The disordered stretch occupies residues 15–111; the sequence is DTDEVNEVEE…ETYQAQTTVQ (97 aa). Composition is skewed to polar residues over residues 44 to 57, 64 to 81, and 91 to 111; these read IPSQ…QNPA, ARSQ…PNRQ, and RESV…TTVQ.

The protein belongs to the SepF family. Homodimer. Interacts with FtsZ.

It is found in the cytoplasm. Its function is as follows. Cell division protein that is part of the divisome complex and is recruited early to the Z-ring. Probably stimulates Z-ring formation, perhaps through the cross-linking of FtsZ protofilaments. Its function overlaps with FtsA. The polypeptide is Cell division protein SepF (Streptococcus uberis (strain ATCC BAA-854 / 0140J)).